Consider the following 349-residue polypeptide: Methionine import ATP-binding protein MetN (349 aa).

The region spanning Ile-5–Val-245 is the ABC transporter domain. Gly-37–Ser-44 lines the ATP pocket.

The protein belongs to the ABC transporter superfamily. Methionine importer (TC 3.A.1.24) family. As to quaternary structure, the complex is composed of two ATP-binding proteins (MetN), two transmembrane proteins (MetI) and a solute-binding protein (MetQ).

The protein localises to the cell membrane. The enzyme catalyses L-methionine(out) + ATP + H2O = L-methionine(in) + ADP + phosphate + H(+). The catalysed reaction is D-methionine(out) + ATP + H2O = D-methionine(in) + ADP + phosphate + H(+). In terms of biological role, part of the ABC transporter complex MetNIQ involved in methionine import. Responsible for energy coupling to the transport system. This chain is Methionine import ATP-binding protein MetN, found in Lactobacillus johnsonii (strain CNCM I-12250 / La1 / NCC 533).